A 136-amino-acid chain; its full sequence is ATP synthase F(0) complex subunit C1, mitochondrial (136 aa).

The transit peptide at 1-61 directs the protein to the mitochondrion; the sequence is MQTTGALLIS…REFQTSVVSR (61 aa). The helical transmembrane segment at 77–97 threads the bilayer; the sequence is VGVAGSGAGIGTVFGSLIIGY. Lys104 carries the N6,N6,N6-trimethyllysine modification. Residues 112-132 traverse the membrane as a helical segment; sequence ILGFALSEAMGLFCLMVAFLI.

Belongs to the ATPase C chain family. In terms of assembly, homooctamer; the c-ring consists of eight c subunits forming a circle, and each subunit adopts a hairpin shape. Component of the ATP synthase complex composed at least of ATP5F1A/subunit alpha, ATP5F1B/subunit beta, ATP5MC1/subunit c (homooctomer), MT-ATP6/subunit a, MT-ATP8/subunit 8, ATP5ME/subunit e, ATP5MF/subunit f, ATP5MG/subunit g, ATP5MK/subunit k, ATP5MJ/subunit j, ATP5F1C/subunit gamma, ATP5F1D/subunit delta, ATP5F1E/subunit epsilon, ATP5PF/subunit F6, ATP5PB/subunit b, ATP5PD/subunit d, ATP5PO/subunit OSCP. ATP synthase complex consists of a soluble F(1) head domain (subunits alpha(3) and beta(3)) - the catalytic core - and a membrane F(0) domain - the membrane proton channel (subunits c, a, 8, e, f, g, k and j). These two domains are linked by a central stalk (subunits gamma, delta, and epsilon) rotating inside the F1 region and a stationary peripheral stalk (subunits F6, b, d, and OSCP). Interacts with TMEM70 (homooligomer form); this interaction facilitates the oligomer formation of subunit c/ATP5MC1 (c-ring) and the c-ring membrane insertion and also protects ATP5MC1 against intramitochondrial proteolysis. Trimethylated by ATPSCKMT at Lys-104. Methylation is required for proper incorporation of the C subunit into the ATP synthase complex and mitochondrial respiration.

The protein resides in the mitochondrion membrane. The enzyme catalyses H(+)(in) = H(+)(out). Subunit c, of the mitochondrial membrane ATP synthase complex (F(1)F(0) ATP synthase or Complex V) that produces ATP from ADP in the presence of a proton gradient across the membrane which is generated by electron transport complexes of the respiratory chain. ATP synthase complex consist of a soluble F(1) head domain - the catalytic core - and a membrane F(1) domain - the membrane proton channel. These two domains are linked by a central stalk rotating inside the F(1) region and a stationary peripheral stalk. During catalysis, ATP synthesis in the catalytic domain of F(1) is coupled via a rotary mechanism of the central stalk subunits to proton translocation. With the subunit a (MT-ATP6), forms the proton-conducting channel in the F(0) domain, that contains two crucial half-channels (inlet and outlet) that facilitate proton movement from the mitochondrial intermembrane space (IMS) into the matrix. Protons are taken up via the inlet half-channel and released through the outlet half-channel, following a Grotthuss mechanism. The polypeptide is ATP synthase F(0) complex subunit C1, mitochondrial (Bos taurus (Bovine)).